Consider the following 338-residue polypeptide: tRNA N6-adenosine threonylcarbamoyltransferase (338 aa).

Fe cation is bound by residues histidine 110 and histidine 114. Residues 132 to 136 (VLSGG), aspartate 165, glycine 178, and asparagine 274 contribute to the substrate site. Aspartate 298 is a Fe cation binding site.

Belongs to the KAE1 / TsaD family. It depends on Fe(2+) as a cofactor.

It localises to the cytoplasm. It catalyses the reaction L-threonylcarbamoyladenylate + adenosine(37) in tRNA = N(6)-L-threonylcarbamoyladenosine(37) in tRNA + AMP + H(+). Required for the formation of a threonylcarbamoyl group on adenosine at position 37 (t(6)A37) in tRNAs that read codons beginning with adenine. Is involved in the transfer of the threonylcarbamoyl moiety of threonylcarbamoyl-AMP (TC-AMP) to the N6 group of A37, together with TsaE and TsaB. TsaD likely plays a direct catalytic role in this reaction. This Borrelia duttonii (strain Ly) protein is tRNA N6-adenosine threonylcarbamoyltransferase.